The sequence spans 342 residues: tRNA-specific 2-thiouridylase MnmA (342 aa).

Residues 6 to 13 and Leu32 contribute to the ATP site; that span reads LLSGGVDS. Cys92 serves as the catalytic Nucleophile. Cys92 and Cys191 are disulfide-bonded. Gly116 is an ATP binding site. Positions 138–140 are interaction with tRNA; it reads KDQ. Cys191 serves as the catalytic Cysteine persulfide intermediate. An interaction with tRNA region spans residues 293–294; the sequence is RY.

It belongs to the MnmA/TRMU family.

It is found in the cytoplasm. It catalyses the reaction S-sulfanyl-L-cysteinyl-[protein] + uridine(34) in tRNA + AH2 + ATP = 2-thiouridine(34) in tRNA + L-cysteinyl-[protein] + A + AMP + diphosphate + H(+). Catalyzes the 2-thiolation of uridine at the wobble position (U34) of tRNA, leading to the formation of s(2)U34. The protein is tRNA-specific 2-thiouridylase MnmA of Helicobacter pylori (strain G27).